The chain runs to 259 residues: Undecaprenyl-diphosphatase 4 (259 aa).

8 consecutive transmembrane segments (helical) span residues 1-21 (MNWL…FLPI), 39-59 (AGLF…FIYY), 71-91 (FSKL…IGLL), 99-119 (ISKT…FLYM), 133-153 (ITYK…FPAI), 174-194 (AYFS…LQFV), 208-228 (SLIV…SWMI), and 239-259 (FAYY…TDVF).

This sequence belongs to the UppP family.

Its subcellular location is the cell membrane. It catalyses the reaction di-trans,octa-cis-undecaprenyl diphosphate + H2O = di-trans,octa-cis-undecaprenyl phosphate + phosphate + H(+). Functionally, catalyzes the dephosphorylation of undecaprenyl diphosphate (UPP). Confers resistance to bacitracin. The chain is Undecaprenyl-diphosphatase 4 from Bacillus cereus (strain ZK / E33L).